The chain runs to 215 residues: Na(+)-translocating NADH-quinone reductase subunit D (215 aa).

Helical transmembrane passes span 14–34 (PFISNNPIMLQVLGICSALAV), 42–62 (FVMALAVTVVTGFSNLFISLI), 72–92 (IIVQMTIIASLVIVVDQLLKA), 103–123 (VFVGLIITNCIVMGRAEAYAM), 131–151 (FLDGIGNGLGYGFILLLVGTI), and 178–198 (NGMLLMPPSAFFLIGLFIWVL).

This sequence belongs to the NqrDE/RnfAE family. In terms of assembly, composed of six subunits; NqrA, NqrB, NqrC, NqrD, NqrE and NqrF.

It localises to the cell inner membrane. It catalyses the reaction a ubiquinone + n Na(+)(in) + NADH + H(+) = a ubiquinol + n Na(+)(out) + NAD(+). NQR complex catalyzes the reduction of ubiquinone-1 to ubiquinol by two successive reactions, coupled with the transport of Na(+) ions from the cytoplasm to the periplasm. NqrA to NqrE are probably involved in the second step, the conversion of ubisemiquinone to ubiquinol. This chain is Na(+)-translocating NADH-quinone reductase subunit D, found in Tolumonas auensis (strain DSM 9187 / NBRC 110442 / TA 4).